A 356-amino-acid polypeptide reads, in one-letter code: DNA polymerase IV (356 aa).

A UmuC domain is found at 6-187 (IIHIDMDYFF…LDIGDFPGVG (182 aa)). Aspartate 10 and aspartate 105 together coordinate Mg(2+). Glutamate 106 is a catalytic residue.

Belongs to the DNA polymerase type-Y family. Monomer. Requires Mg(2+) as cofactor.

Its subcellular location is the cytoplasm. It catalyses the reaction DNA(n) + a 2'-deoxyribonucleoside 5'-triphosphate = DNA(n+1) + diphosphate. In terms of biological role, poorly processive, error-prone DNA polymerase involved in untargeted mutagenesis. Copies undamaged DNA at stalled replication forks, which arise in vivo from mismatched or misaligned primer ends. These misaligned primers can be extended by PolIV. Exhibits no 3'-5' exonuclease (proofreading) activity. May be involved in translesional synthesis, in conjunction with the beta clamp from PolIII. This is DNA polymerase IV from Staphylococcus epidermidis (strain ATCC 12228 / FDA PCI 1200).